A 309-amino-acid chain; its full sequence is Peptidyl-prolyl cis-trans isomerase 9 (309 aa).

Positions 8-173 (FLDISVDENL…AKVLISNCGE (166 aa)) constitute a PPIase cyclophilin-type domain. Basic and acidic residues-rich tracts occupy residues 217–229 (NEKK…DKRR), 239–265 (RSHE…RDEN), 280–289 (ERSATPEHWR), and 296–309 (WVHD…EDLV). The interval 217 to 309 (NEKKHEMRND…SHKHPEEDLV (93 aa)) is disordered.

The protein belongs to the cyclophilin-type PPIase family. In terms of tissue distribution, co-expressed with pdi-1 in the syncytial hypodermis.

The enzyme catalyses [protein]-peptidylproline (omega=180) = [protein]-peptidylproline (omega=0). PPIases accelerate the folding of proteins. It catalyzes the cis-trans isomerization of proline imidic peptide bonds in oligopeptides. Thought to function as a catalyst in the folding and modification of cuticle collagens. This is Peptidyl-prolyl cis-trans isomerase 9 (cyn-9) from Caenorhabditis elegans.